Consider the following 416-residue polypeptide: 3-isopropylmalate dehydratase large subunit (416 aa).

[4Fe-4S] cluster is bound by residues Cys-297, Cys-357, and Cys-360.

It belongs to the aconitase/IPM isomerase family. LeuC type 2 subfamily. In terms of assembly, heterodimer of LeuC and LeuD. Requires [4Fe-4S] cluster as cofactor.

The catalysed reaction is (2R,3S)-3-isopropylmalate = (2S)-2-isopropylmalate. The protein operates within amino-acid biosynthesis; L-leucine biosynthesis; L-leucine from 3-methyl-2-oxobutanoate: step 2/4. Catalyzes the isomerization between 2-isopropylmalate and 3-isopropylmalate, via the formation of 2-isopropylmaleate. The protein is 3-isopropylmalate dehydratase large subunit of Methanoregula boonei (strain DSM 21154 / JCM 14090 / 6A8).